Reading from the N-terminus, the 856-residue chain is MSREVLPNNVTPLHYDITLEPNFRAFTFEGSLKIDLQINDHSINSVQINYLEIDFHSARIEGVNAIEVNKNENQQKATLVFPNGTFENLGPSAKLEIIFSGILNDQMAGFYRAKYTDKVTGETKYMATTQMEATDARRAFPCFDEPNLKATFAVTLVSESFLTHLSNMDVRNETIKEGKKYTTFNTTPKMSTYLVAFIVADLRYVESNNFRIPVRVYSTPGDEKFGQFAANLAARTLRFFEDTFNIEYPLPKMDMVAVHEFSAGAMENWGLVTYRVIDLLLDIENSSLDRIQRVAEVIQHELAHQWFGNLVTMDWWEGLWLNEGFATWMSWYSCNKFQPEWKVWEQYVTDNLQRALNLDSLRSSHPIEVPVNNADEINQIFDAISYSKGSSLLRMISKWLGEETFIKGVSQYLNKFKYGNAKTGDLWDALADASGKDVCSVMNIWTKRVGFPVLSVKEHKNKITLTQHRYLSTGDVKEEEDTTIYPILLALKDSTGIDNTLVLNEKSATFELKNEEFFKINGDQSGIFITSYSDERWAKLSKQANLLSVEDRVGLVADAKALSASGYTSTTNFLNLISNWKNEDSFVVWEQIINSLSALKSTWVFEPEDILNALDKFTLDLVLNKLSELGWNIGEDDSFAIQRLKVTLFSAACTSGNEKMQSIAVEMFEEYANGNKQAIPALFKAVVFNTVARLGGENNYEKIFNIYQNPVSSEEKIIALRALGRFEDKELLERTLSYLLDGTVLNQDFYIPMQGIRVHKKGIERLWAWMQEHWDEIAKRLQPGSPVLGGVLTLGLTNFTSFEALEKISAFYSRKVTKGFDQTLAQALDTIRSKAQWVSRDREIVATYLREHEYDQ.

Residues Glu-132 and 264-268 (GAMEN) each bind substrate. His-300 contacts Zn(2+). Catalysis depends on Glu-301, which acts as the Proton acceptor. Residues His-304 and Glu-323 each contribute to the Zn(2+) site.

Belongs to the peptidase M1 family. It depends on Zn(2+) as a cofactor.

Functionally, positive effector of glycogen accumulation. May be involved in nutrient-sensing. This Saccharomyces cerevisiae (strain ATCC 204508 / S288c) (Baker's yeast) protein is Alanine/arginine aminopeptidase (AAP1).